Here is a 203-residue protein sequence, read N- to C-terminus: Pyridoxal 5'-phosphate synthase subunit PdxT (203 aa).

51–53 (GES) is a binding site for L-glutamine. The active-site Nucleophile is the cysteine 83. L-glutamine is bound by residues arginine 110 and 137–138 (IR). Active-site charge relay system residues include histidine 172 and glutamate 174.

Belongs to the glutaminase PdxT/SNO family. In the presence of PdxS, forms a dodecamer of heterodimers. Only shows activity in the heterodimer.

The catalysed reaction is aldehydo-D-ribose 5-phosphate + D-glyceraldehyde 3-phosphate + L-glutamine = pyridoxal 5'-phosphate + L-glutamate + phosphate + 3 H2O + H(+). It catalyses the reaction L-glutamine + H2O = L-glutamate + NH4(+). Its pathway is cofactor biosynthesis; pyridoxal 5'-phosphate biosynthesis. Functionally, catalyzes the hydrolysis of glutamine to glutamate and ammonia as part of the biosynthesis of pyridoxal 5'-phosphate. The resulting ammonia molecule is channeled to the active site of PdxS. This is Pyridoxal 5'-phosphate synthase subunit PdxT from Thermoplasma acidophilum (strain ATCC 25905 / DSM 1728 / JCM 9062 / NBRC 15155 / AMRC-C165).